We begin with the raw amino-acid sequence, 490 residues long: Betaine aldehyde dehydrogenase (490 aa).

K(+) is bound by residues I27 and D93. 150 to 152 provides a ligand contact to NAD(+); the sequence is GAW. K162 functions as the Charge relay system in the catalytic mechanism. 176–179 contributes to the NAD(+) binding site; it reads KPSE. Position 180 (V180) interacts with K(+). 230–233 serves as a coordination point for NAD(+); the sequence is GTDT. Residue L246 participates in K(+) binding. The Proton acceptor role is filled by E252. NAD(+) is bound by residues G254, C286, and E387. C286 acts as the Nucleophile in catalysis. Cysteine sulfenic acid (-SOH) is present on C286. Residues K457 and G460 each coordinate K(+). The Charge relay system role is filled by E464.

The protein belongs to the aldehyde dehydrogenase family. As to quaternary structure, dimer of dimers. The cofactor is K(+).

The catalysed reaction is betaine aldehyde + NAD(+) + H2O = glycine betaine + NADH + 2 H(+). It participates in amine and polyamine biosynthesis; betaine biosynthesis via choline pathway; betaine from betaine aldehyde: step 1/1. Involved in the biosynthesis of the osmoprotectant glycine betaine. Catalyzes the irreversible oxidation of betaine aldehyde to the corresponding acid. This is Betaine aldehyde dehydrogenase from Pseudomonas savastanoi pv. phaseolicola (strain 1448A / Race 6) (Pseudomonas syringae pv. phaseolicola (strain 1448A / Race 6)).